Consider the following 441-residue polypeptide: GTPase Der (441 aa).

EngA-type G domains are found at residues 4 to 169 and 178 to 353; these read SIVA…PPEA and PRIA…QNRN. GTP-binding positions include 10–17, 57–61, 120–123, 184–191, 231–235, and 296–299; these read GRPNVGKS, DTGGI, NKVD, GKPNVGKS, DTAGL, and NKWD. The KH-like domain maps to 354 to 438; the sequence is LRISTGVLNE…SLKFFIRERK (85 aa).

It belongs to the TRAFAC class TrmE-Era-EngA-EngB-Septin-like GTPase superfamily. EngA (Der) GTPase family. In terms of assembly, associates with the 50S ribosomal subunit.

Its function is as follows. GTPase that plays an essential role in the late steps of ribosome biogenesis. The protein is GTPase Der of Lachnoclostridium phytofermentans (strain ATCC 700394 / DSM 18823 / ISDg) (Clostridium phytofermentans).